Consider the following 156-residue polypeptide: Large ribosomal subunit protein eL24 (156 aa).

Residues 110–123 (RAAKEKQKQKELEK) are compositionally biased toward basic and acidic residues. Residues 110-156 (RAAKEKQKQKELEKKAKKVEKKKPTLAPKQKAAKITQKPAPRVGGKR) form a disordered region.

The protein belongs to the eukaryotic ribosomal protein eL24 family.

This is Large ribosomal subunit protein eL24 (RPL24) from Schistosoma japonicum (Blood fluke).